Reading from the N-terminus, the 361-residue chain is DNA double-strand break repair protein Mre11 (361 aa).

Mn(2+) contacts are provided by aspartate 7, histidine 9, aspartate 48, and asparagine 83. Histidine 84 functions as the Proton donor in the catalytic mechanism. Residues histidine 176, histidine 204, and histidine 206 each contribute to the Mn(2+) site.

It belongs to the MRE11/RAD32 family. As to quaternary structure, homodimer. Forms a heterotetramer composed of two Mre11 subunits and two Rad50 subunits. It depends on Mn(2+) as a cofactor.

With respect to regulation, nuclease activity is regulated by Rad50. Part of the Rad50/Mre11 complex, which is involved in the early steps of DNA double-strand break (DSB) repair. The complex may facilitate opening of the processed DNA ends to aid in the recruitment of HerA and NurA. Mre11 binds to DSB ends and has both double-stranded 3'-5' exonuclease activity and single-stranded endonuclease activity. The polypeptide is DNA double-strand break repair protein Mre11 (Nanoarchaeum equitans (strain Kin4-M)).